The sequence spans 264 residues: Virulence plasmid protein pGP3-D (264 aa).

The polypeptide is Virulence plasmid protein pGP3-D (Chlamydia muridarum (strain MoPn / Nigg)).